Reading from the N-terminus, the 210-residue chain is Probable membrane protein Rv1733c (210 aa).

2 helical membrane-spanning segments follow: residues 43 to 63 (AVVMLLAVTVSLLTIPFAAAA) and 165 to 185 (ALAALGLWLSVAAVAGALLAL).

It is found in the cell membrane. The chain is Probable membrane protein Rv1733c from Mycobacterium tuberculosis (strain ATCC 25618 / H37Rv).